The sequence spans 205 residues: Holliday junction branch migration complex subunit RuvA (205 aa).

The segment at 1–64 (MIGRIRGLLV…EDAQLLYGFI (64 aa)) is domain I. Residues 65–143 (SKQERALFRL…SLMEASVGSE (79 aa)) form a domain II region. A flexible linker region spans residues 144–156 (REFMLQSNYTAPV). Residues 157 to 205 (VANTAEEDAIAALLSLGYKPAQASKAVSAVYVDGIDSESLIKSALKSML) form a domain III region.

It belongs to the RuvA family. In terms of assembly, homotetramer. Forms an RuvA(8)-RuvB(12)-Holliday junction (HJ) complex. HJ DNA is sandwiched between 2 RuvA tetramers; dsDNA enters through RuvA and exits via RuvB. An RuvB hexamer assembles on each DNA strand where it exits the tetramer. Each RuvB hexamer is contacted by two RuvA subunits (via domain III) on 2 adjacent RuvB subunits; this complex drives branch migration. In the full resolvosome a probable DNA-RuvA(4)-RuvB(12)-RuvC(2) complex forms which resolves the HJ.

The protein resides in the cytoplasm. Functionally, the RuvA-RuvB-RuvC complex processes Holliday junction (HJ) DNA during genetic recombination and DNA repair, while the RuvA-RuvB complex plays an important role in the rescue of blocked DNA replication forks via replication fork reversal (RFR). RuvA specifically binds to HJ cruciform DNA, conferring on it an open structure. The RuvB hexamer acts as an ATP-dependent pump, pulling dsDNA into and through the RuvAB complex. HJ branch migration allows RuvC to scan DNA until it finds its consensus sequence, where it cleaves and resolves the cruciform DNA. The chain is Holliday junction branch migration complex subunit RuvA from Shewanella piezotolerans (strain WP3 / JCM 13877).